A 324-amino-acid chain; its full sequence is 6-methylsalicylic acid decarboxylase (324 aa).

Residues His7, His9, His157, and Asp274 each coordinate Zn(2+).

It belongs to the metallo-dependent hydrolases superfamily. ACMSD family. As to quaternary structure, monomer.

The protein resides in the cytoplasm. It localises to the cytosol. The enzyme catalyses 6-methylsalicylate + H(+) = 3-methylphenol + CO2. It participates in mycotoxin biosynthesis; patulin biosynthesis. Functionally, 6-methylsalicylic acid decarboxylase; part of the gene cluster that mediates the biosynthesis of patulin, an acetate-derived tetraketide mycotoxin produced by several fungal species that shows antimicrobial properties against several bacteria. PatG catalyzes the decarboxylation of 6-methylsalicylic acid to yield m-cresol. The pathway begins with the synthesis of 6-methylsalicylic acid by the polyketide synthase (PKS) patK via condensation of acetate and malonate units. The 6-methylsalicylic acid decarboxylase patG then catalyzes the decarboxylation of 6-methylsalicylic acid to yield m-cresol (also known as 3-methylphenol). These first reactions occur in the cytosol. The intermediate m-cresol is then transported into the endoplasmic reticulum where the cytochrome P450 monooxygenase patH converts it to m-hydroxybenzyl alcohol, which is further converted to gentisyl alcohol by the cytochrome P450 monooxygenase patI. The oxidoreductases patJ and patO further convert gentisyl alcohol to isoepoxydon in the vacuole. PatN catalyzes then the transformation of isoepoxydon into phyllostine. The cluster protein patF is responsible for the conversion from phyllostine to neopatulin whereas the alcohol dehydrogenase patD converts neopatulin to E-ascladiol. The steps between isoepoxydon and E-ascladiol occur in the cytosol, and E-ascladiol is probably secreted to the extracellular space by one of the cluster-specific transporters patC or patM. Finally, the secreted patulin synthase patE catalyzes the conversion of E-ascladiol to patulin. The polypeptide is 6-methylsalicylic acid decarboxylase (Penicillium expansum (Blue mold rot fungus)).